A 345-amino-acid polypeptide reads, in one-letter code: Phosphoribosylformylglycinamidine cyclo-ligase (345 aa).

The protein belongs to the AIR synthase family.

It localises to the cytoplasm. It carries out the reaction 2-formamido-N(1)-(5-O-phospho-beta-D-ribosyl)acetamidine + ATP = 5-amino-1-(5-phospho-beta-D-ribosyl)imidazole + ADP + phosphate + H(+). It functions in the pathway purine metabolism; IMP biosynthesis via de novo pathway; 5-amino-1-(5-phospho-D-ribosyl)imidazole from N(2)-formyl-N(1)-(5-phospho-D-ribosyl)glycinamide: step 2/2. In Myxococcus xanthus (strain DK1622), this protein is Phosphoribosylformylglycinamidine cyclo-ligase.